Reading from the N-terminus, the 128-residue chain is Small ribosomal subunit protein eS8 (128 aa).

This sequence belongs to the eukaryotic ribosomal protein eS8 family. As to quaternary structure, part of the 30S ribosomal subunit.

The protein is Small ribosomal subunit protein eS8 of Methanococcus vannielii (strain ATCC 35089 / DSM 1224 / JCM 13029 / OCM 148 / SB).